Here is a 450-residue protein sequence, read N- to C-terminus: WD repeat-containing protein ATCSA-1 (450 aa).

WD repeat units lie at residues 41–81, 101–141, 148–185, and 188–228; these read PHRG…DYEA, GHKY…AVVD, VYRTAMSSMAMSHTLIAAGTEDVQVRLCDIASGAFSHT, and GHRD…CFRV. Residues 269–298 form a disordered region; sequence LQSKQTGSQSVKGSSSAKASVEKSRQKRIH. The segment covering 271–287 has biased composition (low complexity); that stretch reads SKQTGSQSVKGSSSAKA. WD repeat units follow at residues 310 to 349 and 397 to 436; these read AHYGAVTGLKATNDGMYLLSAGSDSRIRLWDIESGRNTLV and GHYESVNTCCFNSNDQELYTSGSDRQILVWSPGGTVEDEM.

As to quaternary structure, interacts with DDB1A. In terms of tissue distribution, expressed in roots, leaves, stems, flowers and siliques.

It localises to the nucleus. Involved in UV-B tolerance and genome integrity. In association with DDB2, is necessary for repair of UV-B-induced DNA lesions. The polypeptide is WD repeat-containing protein ATCSA-1 (Arabidopsis thaliana (Mouse-ear cress)).